We begin with the raw amino-acid sequence, 216 residues long: Adenylate kinase (216 aa).

10 to 15 contributes to the ATP binding site; the sequence is GAGKGT. An NMP region spans residues 30 to 59; sequence STGDIFRKNISNKTPLGMEAKSYMDKGQLV. AMP contacts are provided by residues T31, R36, 57–59, 85–88, and Q92; these read QLV and GFPR. The tract at residues 126–163 is LID; it reads GRRVCGECGASYHIKFITPKTEGVCDLCGGKLVQRKDD. R127 provides a ligand contact to ATP. Zn(2+) contacts are provided by C130 and C133. 136–137 is an ATP binding site; the sequence is SY. C150 and C153 together coordinate Zn(2+). Positions 160 and 171 each coordinate AMP. K199 serves as a coordination point for ATP.

This sequence belongs to the adenylate kinase family. Monomer.

Its subcellular location is the cytoplasm. It catalyses the reaction AMP + ATP = 2 ADP. Its pathway is purine metabolism; AMP biosynthesis via salvage pathway; AMP from ADP: step 1/1. Its function is as follows. Catalyzes the reversible transfer of the terminal phosphate group between ATP and AMP. Plays an important role in cellular energy homeostasis and in adenine nucleotide metabolism. The polypeptide is Adenylate kinase (Clostridium tetani (strain Massachusetts / E88)).